A 996-amino-acid polypeptide reads, in one-letter code: UPF0182 protein CE0802 (996 aa).

The next 7 helical transmembrane spans lie at 19-39 (VTWI…TVGF), 63-83 (IILF…AGYF), 115-135 (ILII…QRSW), 176-196 (STLL…LGGI), 212-234 (GARA…TYWL), 262-282 (KIIL…AIFL), and 290-310 (LAVV…PLML). Residues 920 to 950 (VPDVNATEDADATTDGEDETPAAPAAPAGSE) form a disordered region. Positions 925-939 (ATEDADATTDGEDET) are enriched in acidic residues. Over residues 940–950 (PAAPAAPAGSE) the composition is skewed to low complexity.

Belongs to the UPF0182 family.

It localises to the cell membrane. The chain is UPF0182 protein CE0802 from Corynebacterium efficiens (strain DSM 44549 / YS-314 / AJ 12310 / JCM 11189 / NBRC 100395).